The following is a 660-amino-acid chain: UvrABC system protein B (660 aa).

In terms of domain architecture, Helicase ATP-binding spans 27-414 (NGVNEGKRHQ…TDEMVQQIIR (388 aa)). 40–47 (GATGTGKT) lines the ATP pocket. Positions 93-116 (YYDYYQPEAYVPSTDTFIEKDASI) match the Beta-hairpin motif. A Helicase C-terminal domain is found at 431–593 (QIDDLLGEIQ…ITPTTINKKI (163 aa)). The segment at 603 to 622 (NDETNEQQQTEVPKKMTKKE) is disordered. A UVR domain is found at 624–659 (EKTIANIEKEMKQAAKDLDFEKATELRDMLFELKAE).

It belongs to the UvrB family. Forms a heterotetramer with UvrA during the search for lesions. Interacts with UvrC in an incision complex.

The protein localises to the cytoplasm. In terms of biological role, the UvrABC repair system catalyzes the recognition and processing of DNA lesions. A damage recognition complex composed of 2 UvrA and 2 UvrB subunits scans DNA for abnormalities. Upon binding of the UvrA(2)B(2) complex to a putative damaged site, the DNA wraps around one UvrB monomer. DNA wrap is dependent on ATP binding by UvrB and probably causes local melting of the DNA helix, facilitating insertion of UvrB beta-hairpin between the DNA strands. Then UvrB probes one DNA strand for the presence of a lesion. If a lesion is found the UvrA subunits dissociate and the UvrB-DNA preincision complex is formed. This complex is subsequently bound by UvrC and the second UvrB is released. If no lesion is found, the DNA wraps around the other UvrB subunit that will check the other stand for damage. This Staphylococcus saprophyticus subsp. saprophyticus (strain ATCC 15305 / DSM 20229 / NCIMB 8711 / NCTC 7292 / S-41) protein is UvrABC system protein B.